The following is a 352-amino-acid chain: Phosphate acyltransferase (352 aa).

Residues 328–339 are compositionally biased toward basic and acidic residues; sequence ESFPGDAREREG. The tract at residues 328 to 352 is disordered; it reads ESFPGDAREREGAPAPDAGTERVAS.

The protein belongs to the PlsX family. Homodimer. Probably interacts with PlsY.

The protein localises to the cytoplasm. It carries out the reaction a fatty acyl-[ACP] + phosphate = an acyl phosphate + holo-[ACP]. It participates in lipid metabolism; phospholipid metabolism. Functionally, catalyzes the reversible formation of acyl-phosphate (acyl-PO(4)) from acyl-[acyl-carrier-protein] (acyl-ACP). This enzyme utilizes acyl-ACP as fatty acyl donor, but not acyl-CoA. The chain is Phosphate acyltransferase from Citrifermentans bemidjiense (strain ATCC BAA-1014 / DSM 16622 / JCM 12645 / Bem) (Geobacter bemidjiensis).